An 806-amino-acid chain; its full sequence is Leucine--tRNA ligase (806 aa).

The 'HIGH' region signature appears at 40–51 (PYPSGTGLHVGH). A 'KMSKS' region motif is present at residues 576-580 (KMSKS). Lys579 is a binding site for ATP.

The protein belongs to the class-I aminoacyl-tRNA synthetase family.

The protein resides in the cytoplasm. It carries out the reaction tRNA(Leu) + L-leucine + ATP = L-leucyl-tRNA(Leu) + AMP + diphosphate. This is Leucine--tRNA ligase from Prosthecochloris aestuarii (strain DSM 271 / SK 413).